A 141-amino-acid polypeptide reads, in one-letter code: Glutamyl-tRNA(Gln) amidotransferase subunit C, chloroplastic/mitochondrial (141 aa).

The protein belongs to the GatC family. As to quaternary structure, subunit of the heterotrimeric GatCAB amidotransferase (AdT) complex, composed of A, B and C subunits.

The protein resides in the mitochondrion. It is found in the plastid. Its subcellular location is the chloroplast. It carries out the reaction L-glutamyl-tRNA(Gln) + L-glutamine + ATP + H2O = L-glutaminyl-tRNA(Gln) + L-glutamate + ADP + phosphate + H(+). Its function is as follows. Allows the formation of correctly charged Gln-tRNA(Gln) through the transamidation of misacylated Glu-tRNA(Gln) in chloroplasts and mitochondria. The reaction takes place in the presence of glutamine and ATP through an activated gamma-phospho-Glu-tRNA(Gln). In Populus trichocarpa (Western balsam poplar), this protein is Glutamyl-tRNA(Gln) amidotransferase subunit C, chloroplastic/mitochondrial.